The primary structure comprises 611 residues: Ankyrin repeat protein SKIP35 (611 aa).

6 ANK repeats span residues 292 to 322 (LFSN…EGGA), 323 to 353 (DNVN…RNSL), 356 to 384 (DVDL…NAIA), 385 to 414 (FLGP…DMEL), 416 to 442 (LALT…PPVL), and 445 to 478 (LSIE…DSTA).

As to quaternary structure, interacts with SKP1A/ASK1.

The chain is Ankyrin repeat protein SKIP35 (SKIP35) from Arabidopsis thaliana (Mouse-ear cress).